A 185-amino-acid chain; its full sequence is ATP synthase subunit b 2 (185 aa).

Residues methionine 1 to alanine 23 form a disordered region. Residues lysine 9–aspartate 18 are compositionally biased toward low complexity. Residues threonine 32–valine 51 traverse the membrane as a helical segment.

This sequence belongs to the ATPase B chain family. As to quaternary structure, F-type ATPases have 2 components, F(1) - the catalytic core - and F(0) - the membrane proton channel. F(1) has five subunits: alpha(3), beta(3), gamma(1), delta(1), epsilon(1). F(0) has three main subunits: a(1), b(2) and c(10-14). The alpha and beta chains form an alternating ring which encloses part of the gamma chain. F(1) is attached to F(0) by a central stalk formed by the gamma and epsilon chains, while a peripheral stalk is formed by the delta and b chains.

Its subcellular location is the cell inner membrane. In terms of biological role, f(1)F(0) ATP synthase produces ATP from ADP in the presence of a proton or sodium gradient. F-type ATPases consist of two structural domains, F(1) containing the extramembraneous catalytic core and F(0) containing the membrane proton channel, linked together by a central stalk and a peripheral stalk. During catalysis, ATP synthesis in the catalytic domain of F(1) is coupled via a rotary mechanism of the central stalk subunits to proton translocation. Component of the F(0) channel, it forms part of the peripheral stalk, linking F(1) to F(0). The b'-subunit is a diverged and duplicated form of b found in plants and photosynthetic bacteria. The polypeptide is ATP synthase subunit b 2 (atpF2) (Rhodopseudomonas palustris (strain HaA2)).